The primary structure comprises 89 residues: Protein YihD (89 aa).

To H.influenzae HI_0845.

This Escherichia coli O157:H7 protein is Protein YihD (yihD).